The primary structure comprises 329 residues: Tetraacyldisaccharide 4'-kinase (329 aa).

Position 58–65 (58–65) interacts with ATP; the sequence is SVGGTGKT.

Belongs to the LpxK family.

It catalyses the reaction a lipid A disaccharide + ATP = a lipid IVA + ADP + H(+). It functions in the pathway glycolipid biosynthesis; lipid IV(A) biosynthesis; lipid IV(A) from (3R)-3-hydroxytetradecanoyl-[acyl-carrier-protein] and UDP-N-acetyl-alpha-D-glucosamine: step 6/6. Its function is as follows. Transfers the gamma-phosphate of ATP to the 4'-position of a tetraacyldisaccharide 1-phosphate intermediate (termed DS-1-P) to form tetraacyldisaccharide 1,4'-bis-phosphate (lipid IVA). This is Tetraacyldisaccharide 4'-kinase from Idiomarina loihiensis (strain ATCC BAA-735 / DSM 15497 / L2-TR).